Reading from the N-terminus, the 622-residue chain is Prothrombin (622 aa).

An N-terminal signal peptide occupies residues 1 to 24 (MAHVRGLQLPGCLALAALCSLVHS). Residues 25–43 (QHVFLAPQQARSLLQRVRR) constitute a propeptide that is removed on maturation. The Gla domain maps to 44–89 (ANTFLEEVRKGNLERECVEETCSYEEAFEALESSTATDVFWAKYTA). Glu-49, Glu-50, Glu-57, Glu-59, Glu-62, Glu-63, Glu-68, Glu-69, Glu-72, and Glu-75 each carry 4-carboxyglutamate. A disulfide bond links Cys-60 and Cys-65. Disulfide bonds link Cys-90–Cys-103, Cys-108–Cys-186, Cys-129–Cys-169, Cys-157–Cys-181, Cys-213–Cys-291, Cys-234–Cys-274, Cys-262–Cys-286, Cys-336–Cys-482, Cys-391–Cys-407, Cys-536–Cys-550, and Cys-564–Cys-594. 2 consecutive Kringle domains span residues 108-186 (CAEG…IPVC) and 213-291 (CVPD…LNYC). N-linked (GlcNAc...) (complex) asparagine glycosylation is found at Asn-121 and Asn-143. The 255-residue stretch at 364–618 (IVEGSDAEIG…LKKWIQKVID (255 aa)) folds into the Peptidase S1 domain. Catalysis depends on His-406, which acts as the Charge relay system. An N-linked (GlcNAc...) (complex) asparagine glycan is attached at Asn-416. Residue Asp-462 is the Charge relay system of the active site. A high affinity receptor-binding region which is also known as the TP508 peptide region spans residues 551-573 (AGYKPDEGKRGDACEGDSGGPFV). Residue Ser-568 is the Charge relay system of the active site.

The protein belongs to the peptidase S1 family. As to quaternary structure, heterodimer (named alpha-thrombin) of a light and a heavy chain; disulfide-linked. Forms a heterodimer with SERPINA5. In plasma, interacts (via N-terminus) with alpha-1-microglobulin with molar ratio 1:2 and 1:1; this interaction does not prevent the activation of prothrombin to thrombin. Interacts (thrombin) with iripin-8, a serine protease inhibitor from Ixodes ricinus saliva. Interacts (thrombin) with iripin-3, a serine protease inhibitor from Ixodes ricinus saliva. Interacts (thrombin) with Anopheles albimanus salivary thrombin inhibitor anophelin; the interaction results in thrombin inhibition. Interacts (thrombin) with Anopheles gambiae salivary thrombin inhibitor anophelin; the interaction results in thrombin inhibition. Interacts (thrombin) with Amblyomma variegatum variegin; the interaction results in thrombin inhibition. Interacts (thrombin) with Xenopsylla cheopis salivary thrombin inhibitor XC-42. Interacts (thrombin) with Xenopsylla cheopis salivary thrombin inhibitor XC-43. The gamma-carboxyglutamyl residues, which bind calcium ions, result from the carboxylation of glutamyl residues by a microsomal enzyme, the vitamin K-dependent carboxylase. The modified residues are necessary for the calcium-dependent interaction with a negatively charged phospholipid surface, which is essential for the conversion of prothrombin to thrombin. In terms of processing, N-glycosylated. N-glycan heterogeneity at Asn-121: Hex3HexNAc3 (minor), Hex4HexNAc3 (minor) and Hex5HexNAc4 (major). At Asn-143: Hex4HexNAc3 (minor) and Hex5HexNAc4 (major). Post-translationally, in the penultimate step of the coagulation cascade, prothrombin is converted to thrombin by the prothrombinase complex composed of factor Xa (F10), cofactor Va (F5), and phospholipids. This activation requires factor Xa-catalyzed sequential cleavage at 2 sites, Arg-314 and Arg-363, along 2 possible pathways. In the first pathway, the first cleavage occurs at Arg-314, leading to the formation of the inactive intermediate prethrombin-2. This pathway preferentially occurs on platelets and in the absence of cofactor Va. In the second pathway, the first cleavage occurs at Arg-363, which separates protease domain into 2 chains that remain connected through a disulfide bond and generates the active intermediate meizothrombin. The presence of cofactor Va directs activation along the meizothrombin pathway and greatly accelerates the rate of cleavage at Arg-363, but has a smaller effect on the cleavage of meizothrombin at Arg-314. Meizothrombin accumulates as an intermediate when prothrombinase is assembled on the membrane of red blood cells. Expressed by the liver and secreted in plasma.

It is found in the secreted. Its subcellular location is the extracellular space. The catalysed reaction is Selective cleavage of Arg-|-Gly bonds in fibrinogen to form fibrin and release fibrinopeptides A and B.. With respect to regulation, activity is promoted in the presence of negatively charged surfaces, such as polyphosphate and dextran sulfate. Inhibited by SERPINA5. In terms of biological role, thrombin, which cleaves bonds after Arg and Lys, converts fibrinogen to fibrin and activates factors V, VII, VIII, XIII, and, in complex with thrombomodulin, protein C. Functions in blood homeostasis, inflammation and wound healing. Activates coagulation factor XI (F11); activation is promoted by the contact with negatively charged surfaces. Triggers the production of pro-inflammatory cytokines, such as MCP-1/CCL2 and IL8/CXCL8, in endothelial cells. This is Prothrombin (F2) from Homo sapiens (Human).